The sequence spans 291 residues: HTH-type transcriptional regulator DgcR (291 aa).

Residues 1–58 (MRLRHIEVFHAIYTTGSITNAAKALHVSQPSVSKVLSHAEMQLGFKLFERVKGRLIPT) enclose the HTH lysR-type domain. The H-T-H motif DNA-binding region spans 18–37 (ITNAAKALHVSQPSVSKVLS).

This sequence belongs to the LysR transcriptional regulatory family.

Functionally, transcriptional regulator that positively regulates the expression of the D-Glu gene cluster (DGC). The cluster includes dgcN and dgcA, which are involved in a deamination-independent D-glutamate degradation pathway, dgcR itself, dgcT, dgcP and dgcH. Acts by binding the consensus sequence upstream of dgcR, dgcT, dgcP and dgcH. The chain is HTH-type transcriptional regulator DgcR from Pseudoalteromonas sp.